Consider the following 203-residue polypeptide: GTP cyclohydrolase 1 (203 aa).

Zn(2+) is bound by residues C87, H90, and C158.

Belongs to the GTP cyclohydrolase I family. In terms of assembly, toroid-shaped homodecamer, composed of two pentamers of five dimers.

It catalyses the reaction GTP + H2O = 7,8-dihydroneopterin 3'-triphosphate + formate + H(+). It participates in cofactor biosynthesis; 7,8-dihydroneopterin triphosphate biosynthesis; 7,8-dihydroneopterin triphosphate from GTP: step 1/1. This is GTP cyclohydrolase 1 from Xylella fastidiosa (strain 9a5c).